A 265-amino-acid polypeptide reads, in one-letter code: Putative 2-aminoethylphosphonate transport system permease protein PhnV (265 aa).

Helical transmembrane passes span 13–33, 69–89, 104–124, 131–151, 185–205, and 233–253; these read GVVASVLFIVFFFLPLAVILM, LTIGFCASLFALLCGVWAALA, VFYLPSAIPSVSVGLGILVAF, MNGTLWIVLTAHFVLISAFTF, LPLLMPWMVSALALSLSLSMG, and NIADGAALTIVLVAITLLLMM. One can recognise an ABC transmembrane type-1 domain in the interval 65-253; sequence LLASLTIGFC…LVAITLLLMM (189 aa).

This sequence belongs to the binding-protein-dependent transport system permease family.

It is found in the cell inner membrane. Probably part of the PhnSTUV complex (TC 3.A.1.11.5) involved in 2-aminoethylphosphonate import. Probably responsible for the translocation of the substrate across the membrane. The sequence is that of Putative 2-aminoethylphosphonate transport system permease protein PhnV (phnV) from Salmonella paratyphi A (strain ATCC 9150 / SARB42).